Consider the following 247-residue polypeptide: Small ribosomal subunit protein uS2 (247 aa).

It belongs to the universal ribosomal protein uS2 family.

This is Small ribosomal subunit protein uS2 from Cupriavidus taiwanensis (strain DSM 17343 / BCRC 17206 / CCUG 44338 / CIP 107171 / LMG 19424 / R1) (Ralstonia taiwanensis (strain LMG 19424)).